We begin with the raw amino-acid sequence, 798 residues long: Translation initiation factor IF-2 (798 aa).

The disordered stretch occupies residues S40–P207. A compositionally biased stretch (low complexity) spans N57 to N186. Residues R187–K196 are compositionally biased toward basic residues. In terms of domain architecture, tr-type G spans T300–K469. Residues G309 to T316 are G1. Residue G309 to T316 coordinates GTP. Positions G334–H338 are G2. Residues D355 to G358 form a G3 region. GTP is bound by residues D355–H359 and N409–D412. The segment at N409 to D412 is G4. The segment at S445–K447 is G5.

The protein belongs to the TRAFAC class translation factor GTPase superfamily. Classic translation factor GTPase family. IF-2 subfamily.

Its subcellular location is the cytoplasm. One of the essential components for the initiation of protein synthesis. Protects formylmethionyl-tRNA from spontaneous hydrolysis and promotes its binding to the 30S ribosomal subunits. Also involved in the hydrolysis of GTP during the formation of the 70S ribosomal complex. The chain is Translation initiation factor IF-2 from Enterococcus faecalis (strain ATCC 700802 / V583).